A 317-amino-acid chain; its full sequence is Ribose-phosphate pyrophosphokinase (317 aa).

ATP-binding positions include 43–45 (DGE) and 102–103 (RQ). Mg(2+) is bound by residues His136 and Asp175. Lys198 is a catalytic residue. Residues Arg200, Asp224, and 228–232 (DTAGT) contribute to the D-ribose 5-phosphate site.

Belongs to the ribose-phosphate pyrophosphokinase family. Class I subfamily. Homohexamer. The cofactor is Mg(2+).

It localises to the cytoplasm. The catalysed reaction is D-ribose 5-phosphate + ATP = 5-phospho-alpha-D-ribose 1-diphosphate + AMP + H(+). It functions in the pathway metabolic intermediate biosynthesis; 5-phospho-alpha-D-ribose 1-diphosphate biosynthesis; 5-phospho-alpha-D-ribose 1-diphosphate from D-ribose 5-phosphate (route I): step 1/1. In terms of biological role, involved in the biosynthesis of the central metabolite phospho-alpha-D-ribosyl-1-pyrophosphate (PRPP) via the transfer of pyrophosphoryl group from ATP to 1-hydroxyl of ribose-5-phosphate (Rib-5-P). The chain is Ribose-phosphate pyrophosphokinase from Bacillus anthracis.